The following is a 208-amino-acid chain: Large ribosomal subunit protein uL4 (208 aa).

A disordered region spans residues 49-78; that stretch reads HKAKTRAEVRGGGKKPFRQKGTGNARQGST. The span at 69 to 78 shows a compositional bias: polar residues; that stretch reads GTGNARQGST.

This sequence belongs to the universal ribosomal protein uL4 family. As to quaternary structure, part of the 50S ribosomal subunit.

One of the primary rRNA binding proteins, this protein initially binds near the 5'-end of the 23S rRNA. It is important during the early stages of 50S assembly. It makes multiple contacts with different domains of the 23S rRNA in the assembled 50S subunit and ribosome. In terms of biological role, forms part of the polypeptide exit tunnel. The protein is Large ribosomal subunit protein uL4 of Chlorobaculum tepidum (strain ATCC 49652 / DSM 12025 / NBRC 103806 / TLS) (Chlorobium tepidum).